The sequence spans 266 residues: 3',5'-cyclic-nucleotide phosphodiesterase alr5338 (266 aa).

Fe cation is bound by residues aspartate 14, histidine 16, aspartate 56, asparagine 86, histidine 155, histidine 194, and histidine 196. AMP is bound by residues histidine 16, aspartate 56, and 86–87 (NH). Histidine 196 provides a ligand contact to AMP.

This sequence belongs to the cyclic nucleotide phosphodiesterase class-III family. It depends on Fe(2+) as a cofactor. Mn(2+) is required as a cofactor.

It catalyses the reaction a nucleoside 3',5'-cyclic phosphate + H2O = a nucleoside 5'-phosphate + H(+). It carries out the reaction 3',5'-cyclic AMP + H2O = AMP + H(+). The enzyme catalyses 3',5'-cyclic GMP + H2O = GMP + H(+). With respect to regulation, activated by iron and manganese. Hydrolyzes cAMP to 5'-AMP. Plays an important regulatory role in modulating the intracellular concentration of cAMP, thereby influencing cAMP-dependent processes. Can also hydrolyze cGMP. This chain is 3',5'-cyclic-nucleotide phosphodiesterase alr5338, found in Nostoc sp. (strain PCC 7120 / SAG 25.82 / UTEX 2576).